We begin with the raw amino-acid sequence, 1330 residues long: Major capsid protein (1330 aa).

Belongs to the herpesviridae major capsid protein family. In terms of assembly, homomultimer. Makes the hexons and eleven out of twelve pentons. Interacts with triplex proteins 1/TRX1 and 2/TRX2; adjacent capsomers are linked together in groups of three by triplexes, heterotrimeric complexes composed of one molecule of TRX1 and two molecules of TRX2. Interacts with scaffold protein; this interaction allows efficient MCP transport to the host nucleus. Interacts with capsid vertex component 2/CVC2. Interacts with the small capsomere-interacting protein/SCP.

Its subcellular location is the virion. It is found in the host nucleus. Self-assembles to form an icosahedral capsid with a T=16 symmetry, about 200 nm in diameter, and consisting of 150 hexons and 12 pentons (total of 162 capsomers). Hexons form the edges and faces of the capsid and are each composed of six MCP molecules. In contrast, one penton is found at each of the 12 vertices. Eleven of the pentons are MCP pentamers, while the last vertex is occupied by the portal complex. The capsid is surrounded by a layer of proteinaceous material designated the tegument which, in turn, is enclosed in an envelope of host cell-derived lipids containing virus-encoded glycoproteins. The protein is Major capsid protein of Sus scrofa (Pig).